Here is a 247-residue protein sequence, read N- to C-terminus: MIKLVLLRHGESQWNLENRFTGWHDIDLTDNGRIEASNAGRAIKEAGLTFDIAYTSVLKRAIRTLWNALDVLDLMWIPVVKSWRLNERHYGALQGLNKSETSRKYGEEQVLVWRRSYDTPPPVLDKDDERYPGTDRRYAELGEAEIPLSECLKDTVERFLPIWRDTIEPEIRKGRKVLIVAHGNSLRALVKYLDNISEEDIVGLNIPTGIPLVYELDDDLKPLKSYYLGDQEAIKQAVQAVAGQAKA.

Residues 8 to 15 (RHGESQWN), 21 to 22 (TG), arginine 60, 87 to 90 (ERHY), lysine 98, 114 to 115 (RR), and 183 to 184 (GN) each bind substrate. The active-site Tele-phosphohistidine intermediate is the histidine 9. The active-site Proton donor/acceptor is glutamate 87.

It belongs to the phosphoglycerate mutase family. BPG-dependent PGAM subfamily.

It catalyses the reaction (2R)-2-phosphoglycerate = (2R)-3-phosphoglycerate. It functions in the pathway carbohydrate degradation; glycolysis; pyruvate from D-glyceraldehyde 3-phosphate: step 3/5. Functionally, catalyzes the interconversion of 2-phosphoglycerate and 3-phosphoglycerate. The sequence is that of 2,3-bisphosphoglycerate-dependent phosphoglycerate mutase from Chlorobium limicola (strain DSM 245 / NBRC 103803 / 6330).